A 284-amino-acid polypeptide reads, in one-letter code: MPAAISRNWPAPAKLNLFLHINGRRADGYHELQTLFQFIDCCDMLDFKVTETPELILHSNMSGVVADSDNLILRAAKSLQQTTGFNGGAEIWLDKRLPMGGGLGGGSSDAATTLVALNKLWHTQLSTEELAKIGLKLGADIPVFIHGFAAFAEGVGERLQAVNPSEPWYLVIAPDAHVSTADVFQDPLLPRDTPKLAIDTLMSQPWANDCQKLVVSKYPQVAKALGWLLEYAPSRMTGTGACVFGEFTQQQQALAALAKLPSEMQGFVAQGMNLSPLITRLSHP.

Residue K14 is part of the active site. Residue 98-108 participates in ATP binding; the sequence is PMGGGLGGGSS. The active site involves D140.

This sequence belongs to the GHMP kinase family. IspE subfamily.

The catalysed reaction is 4-CDP-2-C-methyl-D-erythritol + ATP = 4-CDP-2-C-methyl-D-erythritol 2-phosphate + ADP + H(+). Its pathway is isoprenoid biosynthesis; isopentenyl diphosphate biosynthesis via DXP pathway; isopentenyl diphosphate from 1-deoxy-D-xylulose 5-phosphate: step 3/6. Its function is as follows. Catalyzes the phosphorylation of the position 2 hydroxy group of 4-diphosphocytidyl-2C-methyl-D-erythritol. This Shewanella baltica (strain OS223) protein is 4-diphosphocytidyl-2-C-methyl-D-erythritol kinase.